A 201-amino-acid polypeptide reads, in one-letter code: MAKRVTGPEIEKLIQLLAKVPGLGPRSARRAALHLIKKKDQLLGPLSHAMGEAYDKVKICSRCGNVDTVDPCIVCTDVQRDQSVIIVVEDVSDLWALERAGAMNAAYHVLGGTLSPLDGVGPDDLNIRGLIDRVGEGGIRELIIAVNATVEGQTTAHYITDQLQGLDVKITRLAHGVPVGGELDYLDEGTLAAALRARTVI.

The C4-type zinc-finger motif lies at 60–75 (CSRCGNVDTVDPCIVC). The region spanning 83–178 (SVIIVVEDVS…KITRLAHGVP (96 aa)) is the Toprim domain.

It belongs to the RecR family.

Its function is as follows. May play a role in DNA repair. It seems to be involved in an RecBC-independent recombinational process of DNA repair. It may act with RecF and RecO. The polypeptide is Recombination protein RecR (Rhizobium johnstonii (strain DSM 114642 / LMG 32736 / 3841) (Rhizobium leguminosarum bv. viciae)).